The following is a 428-amino-acid chain: D-amino acid dehydrogenase (428 aa).

Position 3 to 17 (3 to 17 (VVVLGSGVVGVASAY)) interacts with FAD.

The protein belongs to the DadA oxidoreductase family. The cofactor is FAD.

It carries out the reaction a D-alpha-amino acid + A + H2O = a 2-oxocarboxylate + AH2 + NH4(+). The protein operates within amino-acid degradation; D-alanine degradation; NH(3) and pyruvate from D-alanine: step 1/1. Oxidative deamination of D-amino acids. The protein is D-amino acid dehydrogenase of Burkholderia ambifaria (strain MC40-6).